The chain runs to 549 residues: FMRFamide receptor (549 aa).

Topologically, residues 1-117 (MSGTAVARLL…NNRIEFWVCG (117 aa)) are extracellular. N-linked (GlcNAc...) asparagine glycosylation is found at Asn-59, Asn-70, and Asn-93. A helical membrane pass occupies residues 118 to 138 (VLINIVGVLGILGNIISMIIL). The Cytoplasmic segment spans residues 139–158 (SRPQMRSSINYLLTGLARCD). Residues 159-179 (TVLIITSILLFGIPSIYPYTG) traverse the membrane as a helical segment. Topologically, residues 180–181 (HF) are extracellular. A helical membrane pass occupies residues 182–202 (FGYYNYVYPFISPAVFPIGMI). Residues 203-238 (AQTASIYMTFTVTLERYVAVCHPLKARALCTYGRAK) are Cytoplasmic-facing. A helical membrane pass occupies residues 239-259 (IYFIVCVCFSLAYNMPRFWEV). At 260–289 (LTVTYPEPGKDVILHCVRPSRLRRSETYIN) the chain is on the extracellular side. Residues 290–310 (IYIHWCYLIVNYIIPFLTLAI) form a helical membrane-spanning segment. At 311 to 341 (LNCLIYRQVKRANRERQRLSRSEKREIGLAT) the chain is on the cytoplasmic side. Residues 342-362 (MLLCVVIVFFMLNFLPLVLNI) traverse the membrane as a helical segment. Topologically, residues 363-376 (SEAFYSTIDHKITK) are extracellular. The helical transmembrane segment at 377-397 (ISNLLITINSSVNFLIYIIFG) threads the bilayer. Residues 398–549 (EKFKRIFLLI…KKLGHVSSGF (152 aa)) lie on the Cytoplasmic side of the membrane.

The protein belongs to the G-protein coupled receptor 1 family. As to expression, expressed in ovaries, heads and bodies. Expressed in dopaminergic neurons.

The protein resides in the cell membrane. Its function is as follows. A receptor for the FMRFamide peptides. Reacts with high affinity to FMRFamide and intrinsic FMRFamide-related peptides. By stimulating intracellular calcium signaling through the inositol 1,4,5-trisphosphate receptor, Itpr, in dopaminergic neurons, may be involved in the maintenance of neuronal excitability and in the regulation of flight bout duration. The chain is FMRFamide receptor from Drosophila melanogaster (Fruit fly).